The following is a 307-amino-acid chain: Methionyl-tRNA formyltransferase (307 aa).

Residue 108–111 (SLLP) coordinates (6S)-5,6,7,8-tetrahydrofolate.

It belongs to the Fmt family.

It catalyses the reaction L-methionyl-tRNA(fMet) + (6R)-10-formyltetrahydrofolate = N-formyl-L-methionyl-tRNA(fMet) + (6S)-5,6,7,8-tetrahydrofolate + H(+). Functionally, attaches a formyl group to the free amino group of methionyl-tRNA(fMet). The formyl group appears to play a dual role in the initiator identity of N-formylmethionyl-tRNA by promoting its recognition by IF2 and preventing the misappropriation of this tRNA by the elongation apparatus. The chain is Methionyl-tRNA formyltransferase from Xanthomonas campestris pv. campestris (strain 8004).